A 148-amino-acid chain; its full sequence is Large ribosomal subunit protein bL9 (148 aa).

It belongs to the bacterial ribosomal protein bL9 family.

In terms of biological role, binds to the 23S rRNA. The chain is Large ribosomal subunit protein bL9 from Parafrankia sp. (strain EAN1pec).